Here is a 1279-residue protein sequence, read N- to C-terminus: ATP-dependent helicase/nuclease subunit A (1279 aa).

In terms of domain architecture, UvrD-like helicase ATP-binding spans 4-499; that stretch reads TKWTDEQRQA…VKLFKNFRSR (496 aa). ATP is bound at residue 25-32; it reads AGAGAGKT. A UvrD-like helicase C-terminal domain is found at 526–853; the sequence is EEALKVGASY…RIMSIHKSKG (328 aa).

The protein belongs to the helicase family. AddA subfamily. As to quaternary structure, heterodimer of AddA and AddB/RexB. Mg(2+) serves as cofactor.

The enzyme catalyses Couples ATP hydrolysis with the unwinding of duplex DNA by translocating in the 3'-5' direction.. The catalysed reaction is ATP + H2O = ADP + phosphate + H(+). Functionally, the heterodimer acts as both an ATP-dependent DNA helicase and an ATP-dependent, dual-direction single-stranded exonuclease. Recognizes the chi site generating a DNA molecule suitable for the initiation of homologous recombination. The AddA nuclease domain is required for chi fragment generation; this subunit has the helicase and 3' -&gt; 5' nuclease activities. The protein is ATP-dependent helicase/nuclease subunit A of Clostridium botulinum (strain ATCC 19397 / Type A).